The following is a 103-amino-acid chain: UPF0145 protein PERMA_0324 (103 aa).

Belongs to the UPF0145 family.

The protein is UPF0145 protein PERMA_0324 of Persephonella marina (strain DSM 14350 / EX-H1).